A 997-amino-acid chain; its full sequence is FIP1[III]-like protein (997 aa).

Disordered regions lie at residues 250–272 (ITSNEASRSDVSHSYGSKDLNSV), 289–475 (AGSF…ETEG), 534–553 (SRSSFDLNQRNSRSSFKEED), and 880–900 (QGKVSNQSKKRFSNGGDTIEQ). Over residues 261–272 (SHSYGSKDLNSV) the composition is skewed to polar residues. 4 stretches are compositionally biased toward basic and acidic residues: residues 309–323 (TPSDKEMLEKEKEES), 334–346 (SVERESSLGDRIR), 367–379 (ESLKDSATDDQRE), and 388–404 (RLAEHEAISIKRGEDSG). Positions 397 to 404 (IKRGEDSG) match the Nuclear localization signal motif. Residues 534–547 (SRSSFDLNQRNSRS) show a composition bias toward polar residues. Residues 930 to 963 (EIIEEVKGVEIDNERIQESLKKMEKRRERFKGTK) adopt a coiled-coil conformation.

It belongs to the FIP1 family. Component of the cleavage and polyadenylation specificity factor (CPSF) complex. Forms a complex with cleavage and polyadenylation specificity factor (CPSF) subunits CLPS5, FIPS5, PAPS4, PCFS1, CSTF64 and CPSF30.

It localises to the nucleus. In terms of biological role, component of the cleavage and polyadenylation specificity factor (CPSF) complex that plays a key role in pre-mRNA 3'-end formation, recognizing the AAUAAA signal sequence and interacting with poly(A) polymerase and other factors to bring about cleavage and poly(A) addition. FIP1L1 contributes to poly(A) site recognition and stimulates poly(A) addition. Binds to U-rich RNA sequence elements surrounding the poly(A) site. May act to tether poly(A) polymerase to the CPSF complex. The polypeptide is FIP1[III]-like protein (Arabidopsis thaliana (Mouse-ear cress)).